The chain runs to 170 residues: Disulfide bond formation protein B (170 aa).

Over 1–14 (MNDSTLALRRERRL) the chain is Cytoplasmic. A helical membrane pass occupies residues 15–31 (LMLLGWVCIALLAGALY). Topologically, residues 32–49 (LQYVKNEDPCPLCIIQRY) are periplasmic. C41 and C44 are disulfide-bonded. Residues 50–64 (FFAAIGIFAFLAAGI) form a helical membrane-spanning segment. The Cytoplasmic segment spans residues 65–71 (RNWRVIW). The chain crosses the membrane as a helical span at residues 72–89 (VFELLIAIAAAGGVGTAA). Topologically, residues 90–144 (RHLSIQMNPGFSCGFDTLQPIVDSLPPAQWFPGMFKVAGLCETVYPPIFGILLPG) are periplasmic. Cysteines 102 and 130 form a disulfide. Residues 145–163 (WALIGFAVILVAVASSLWR) traverse the membrane as a helical segment. The Cytoplasmic portion of the chain corresponds to 164 to 170 (HRRKLAG).

It belongs to the DsbB family.

The protein resides in the cell inner membrane. Its function is as follows. Required for disulfide bond formation in some periplasmic proteins. Acts by oxidizing the DsbA protein. In Burkholderia ambifaria (strain ATCC BAA-244 / DSM 16087 / CCUG 44356 / LMG 19182 / AMMD) (Burkholderia cepacia (strain AMMD)), this protein is Disulfide bond formation protein B.